The following is a 1419-amino-acid chain: L-2-aminoadipate reductase (1419 aa).

A Carrier domain is found at 880–956 (ETLTATERDI…GLAKEIERMK (77 aa)). O-(pantetheine 4'-phosphoryl)serine is present on S916.

Belongs to the ATP-dependent AMP-binding enzyme family. Requires pantetheine 4'-phosphate as cofactor.

It is found in the cytoplasm. The catalysed reaction is (S)-2-amino-6-oxohexanoate + NADP(+) + H2O = L-2-aminoadipate + NADPH + 2 H(+). It carries out the reaction (S)-2-amino-6-oxohexanoate + NAD(+) + H2O = L-2-aminoadipate + NADH + 2 H(+). It catalyses the reaction (S)-2-amino-6-oxohexanoate + AMP + diphosphate + NADP(+) = L-2-aminoadipate + ATP + NADPH + H(+). It functions in the pathway amino-acid biosynthesis; L-lysine biosynthesis via AAA pathway; L-lysine from L-alpha-aminoadipate (fungal route): step 1/3. Its function is as follows. Catalyzes the activation of alpha-aminoadipate by ATP-dependent adenylation and the reduction of activated alpha-aminoadipate by NADPH. The activated alpha-aminoadipate is bound to the phosphopantheinyl group of the enzyme itself before it is reduced to (S)-2-amino-6-oxohexanoate. This Schizosaccharomyces pombe (strain 972 / ATCC 24843) (Fission yeast) protein is L-2-aminoadipate reductase (lys1).